A 321-amino-acid chain; its full sequence is XylDLEGF operon transcriptional activator 1 (321 aa).

Residues 214-315 (ERVVQFIEEN…GELPSDTLRQ (102 aa)) form the HTH araC/xylS-type domain. 2 DNA-binding regions (H-T-H motif) span residues 231–252 (ERLAELAMMSPRSLYNLFEKHA) and 282–305 (ITEIALDYGFLHLGRFAENYRSAF).

It localises to the cytoplasm. Regulatory protein of the TOL plasmid xyl operons. XylS activates the xylXYZLTEGFJQKIH operon required for the degradation of toluene, m-xylene and p-xylene. This is XylDLEGF operon transcriptional activator 1 (xylS1) from Pseudomonas putida (Arthrobacter siderocapsulatus).